Reading from the N-terminus, the 1174-residue chain is Tyrosine-protein phosphatase non-receptor type 21 (1174 aa).

Residues 23 to 308 form the FERM domain; sequence LVARIQLLNN…ARHKFYRLNQ (286 aa). Positions 396 to 423 are enriched in polar residues; it reads SAHSTNSLNNPQPYLQPSPMSSNPSITG. The segment at 396–445 is disordered; that stretch reads SAHSTNSLNNPQPYLQPSPMSSNPSITGSDVMRPDYLPSHRHSAVIPPSY. Residues S577, S589, S590, S637, and S673 each carry the phosphoserine modification. A disordered region spans residues 673–692; that stretch reads SQPSVFTERTQREGPEEAEG. Positions 681 to 692 are enriched in basic and acidic residues; it reads RTQREGPEEAEG. 2 positions are modified to phosphoserine: S710 and S711. 2 disordered regions span residues 711–745 and 769–806; these read SEEE…DPPG and KRMM…TSGR. The span at 712 to 722 shows a compositional bias: acidic residues; sequence EEEEDEDFEEE. The span at 796-805 shows a compositional bias: polar residues; that stretch reads MSESDLTTSG. A phosphoserine mark is found at S797, S799, and S804. The Tyrosine-protein phosphatase domain maps to 896 to 1167; that stretch reads VFTEYERILK…TFVYRVLIQF (272 aa). Residues E1067, 1108–1114, and Q1152 contribute to the substrate site; that span reads CSAGVGR. Residue C1108 is the Phosphocysteine intermediate of the active site.

Belongs to the protein-tyrosine phosphatase family. Non-receptor class subfamily.

It localises to the cytoplasm. Its subcellular location is the cytoskeleton. The enzyme catalyses O-phospho-L-tyrosyl-[protein] + H2O = L-tyrosyl-[protein] + phosphate. This Homo sapiens (Human) protein is Tyrosine-protein phosphatase non-receptor type 21 (PTPN21).